Reading from the N-terminus, the 319-residue chain is Glycine--tRNA ligase alpha subunit (319 aa).

Belongs to the class-II aminoacyl-tRNA synthetase family. As to quaternary structure, tetramer of two alpha and two beta subunits.

It localises to the cytoplasm. The enzyme catalyses tRNA(Gly) + glycine + ATP = glycyl-tRNA(Gly) + AMP + diphosphate. The sequence is that of Glycine--tRNA ligase alpha subunit from Oenococcus oeni (strain ATCC BAA-331 / PSU-1).